Here is a 1788-residue protein sequence, read N- to C-terminus: Glutamine and serine-rich protein 1 (1788 aa).

The span at 1-53 (MDAHYAPAGFAEPPAPPASAATQPAAPAWAYEARVPAAASSPSCSGSSPSLKA) shows a compositional bias: low complexity. Disordered stretches follow at residues 1-69 (MDAH…DVLQ), 472-498 (TRDL…VSQT), and 532-617 (SYSS…SKQD). 4 stretches are compositionally biased toward polar residues: residues 60–69 (PSQSESDVLQ), 478–492 (VSES…SQGL), 532–569 (SYSS…SAQP), and 576–594 (VQSS…SSIP). Phosphoserine occurs at positions 670 and 940. Threonine 1003 is subject to Phosphothreonine. Serine 1041 is modified (phosphoserine). 2 disordered regions span residues 1104–1163 (QPGD…TDVY) and 1234–1264 (IQTT…VSLS). Lysine 1112 participates in a covalent cross-link: Glycyl lysine isopeptide (Lys-Gly) (interchain with G-Cter in SUMO2). Basic and acidic residues predominate over residues 1126-1136 (PKEKAKGKEQG). A Glycyl lysine isopeptide (Lys-Gly) (interchain with G-Cter in SUMO2) cross-link involves residue lysine 1137. Phosphoserine is present on residues serine 1262, serine 1281, and serine 1282. A Phosphothreonine modification is found at threonine 1394. The residue at position 1401 (serine 1401) is a Phosphoserine. Positions 1494–1588 (VCSKKPRNKP…DEGFEPPAPS (95 aa)) are disordered. The span at 1510 to 1537 (IPSKPSSISKTSDPPVSKTTTTKTPSTK) shows a compositional bias: low complexity. The span at 1545 to 1561 (IKAEPPPKKRKKWKEEF) shows a compositional bias: basic and acidic residues. Residues 1562–1575 (SSSQSESSPEVRSS) show a composition bias toward low complexity.

As to quaternary structure, interacts with TET1.

It is found in the chromosome. In terms of biological role, plays an essential role in the protection and maintenance of transcriptional and developmental programs. Protects many bivalent promoters and poised enhancers from hypermethylation, showing a marked preference for these regulatory elements over other types of promoters or enhancers. Mechanistically, cooperates with TET1 and binds to DNA in a common complex to inhibit the binding of DNMT3A/3B and therefore de novo methylation. In Mus musculus (Mouse), this protein is Glutamine and serine-rich protein 1.